The following is a 186-amino-acid chain: Phosphoprotein p30 (186 aa).

It belongs to the asfivirus phosphoprotein p30 family. Oligomer. Interacts with host HNRNPK. In terms of processing, phosphorylated on serine residues in the 115 N-terminal amino acids.

It is found in the host cytoplasm. The protein resides in the host nucleus. It localises to the virion. Functionally, modifies the subcellular distribution of heterogeneous nuclear ribonucleoprotein K (HNRNPK) and may contribute to modulate HNRNPK functions related to processing and export of mRNAs during ASFV infection. Necessary for virus internalization. This African swine fever virus (isolate Tick/South Africa/Pretoriuskop Pr4/1996) (ASFV) protein is Phosphoprotein p30.